Here is a 390-residue protein sequence, read N- to C-terminus: tRNA(Met) cytidine acetate ligase (390 aa).

Residues 7 to 20, Gly101, Asn152, and Arg177 contribute to the ATP site; that span reads ITEY…HIYH.

This sequence belongs to the TmcAL family.

It is found in the cytoplasm. It catalyses the reaction cytidine(34) in elongator tRNA(Met) + acetate + ATP = N(4)-acetylcytidine(34) in elongator tRNA(Met) + AMP + diphosphate. Its function is as follows. Catalyzes the formation of N(4)-acetylcytidine (ac(4)C) at the wobble position of elongator tRNA(Met), using acetate and ATP as substrates. First activates an acetate ion to form acetyladenylate (Ac-AMP) and then transfers the acetyl group to tRNA to form ac(4)C34. The chain is tRNA(Met) cytidine acetate ligase from Leuconostoc mesenteroides subsp. mesenteroides (strain ATCC 8293 / DSM 20343 / BCRC 11652 / CCM 1803 / JCM 6124 / NCDO 523 / NBRC 100496 / NCIMB 8023 / NCTC 12954 / NRRL B-1118 / 37Y).